The sequence spans 278 residues: Hydroxyethylthiazole kinase (278 aa).

Position 48 (Met48) interacts with substrate. Residues Arg124 and Thr175 each coordinate ATP. Gly202 lines the substrate pocket.

Belongs to the Thz kinase family. Mg(2+) serves as cofactor.

It carries out the reaction 5-(2-hydroxyethyl)-4-methylthiazole + ATP = 4-methyl-5-(2-phosphooxyethyl)-thiazole + ADP + H(+). Its pathway is cofactor biosynthesis; thiamine diphosphate biosynthesis; 4-methyl-5-(2-phosphoethyl)-thiazole from 5-(2-hydroxyethyl)-4-methylthiazole: step 1/1. Its function is as follows. Catalyzes the phosphorylation of the hydroxyl group of 4-methyl-5-beta-hydroxyethylthiazole (THZ). The protein is Hydroxyethylthiazole kinase of Clostridium botulinum (strain Alaska E43 / Type E3).